The primary structure comprises 237 residues: MGTERAKERAARFAASLVEDGMIVGLGSGSTAELAVRALGERLHDGLRLIGVATSQRTAALARRVGIELRDPDSVDRIDLAIDGADEVEERSLGLLKGRGGALVREKLVARMARRLVIIIDDSKLVAALGARFPLPVEVVPFGWRWCARWLEDLGGRPTLRCRPTGHPFRSDNGNLILDVAFGAIADPAWLDRTIKMLPGVIDHGLFLDMADLVIVGSETGIRLLERSRTVSETSKS.

Substrate contacts are provided by residues 28 to 31 (SGST), 83 to 86 (DGAD), and 97 to 100 (KGRG). Residue Glu-106 is the Proton acceptor of the active site. Position 124 (Lys-124) interacts with substrate.

Belongs to the ribose 5-phosphate isomerase family. In terms of assembly, homodimer.

The enzyme catalyses aldehydo-D-ribose 5-phosphate = D-ribulose 5-phosphate. It functions in the pathway carbohydrate degradation; pentose phosphate pathway; D-ribose 5-phosphate from D-ribulose 5-phosphate (non-oxidative stage): step 1/1. In terms of biological role, catalyzes the reversible conversion of ribose-5-phosphate to ribulose 5-phosphate. In Thermomicrobium roseum (strain ATCC 27502 / DSM 5159 / P-2), this protein is Ribose-5-phosphate isomerase A.